The following is a 100-amino-acid chain: Small ribosomal subunit protein bS21 (100 aa).

Basic and acidic residues predominate over residues 37-52 (EKPSEKKAREKAEAVR). Residues 37 to 100 (EKPSEKKARE…GAGAGPRGPR (64 aa)) are disordered. A compositionally biased stretch (basic residues) spans 53–62 (RARKLARKKL). Residues 84–100 (GAAGAGAGAGAGPRGPR) show a composition bias toward gly residues.

It belongs to the bacterial ribosomal protein bS21 family.

In Rhodopseudomonas palustris (strain BisB5), this protein is Small ribosomal subunit protein bS21.